Consider the following 126-residue polypeptide: Small ribosomal subunit protein bS6 (126 aa).

The tract at residues 101-126 (VMMKAKEERTAKREDAAPRAEEAAAE) is disordered. A compositionally biased stretch (basic and acidic residues) spans 104-126 (KAKEERTAKREDAAPRAEEAAAE).

The protein belongs to the bacterial ribosomal protein bS6 family.

Functionally, binds together with bS18 to 16S ribosomal RNA. In Aliivibrio salmonicida (strain LFI1238) (Vibrio salmonicida (strain LFI1238)), this protein is Small ribosomal subunit protein bS6.